The sequence spans 74 residues: ATP synthase subunit c (74 aa).

2 helical membrane-spanning segments follow: residues 9–29 and 54–74; these read IGAGIAVIALAGVGIGLGNIF and FALTEAVALYALLIAFLILFV.

It belongs to the ATPase C chain family. As to quaternary structure, F-type ATPases have 2 components, F(1) - the catalytic core - and F(0) - the membrane proton channel. F(1) has five subunits: alpha(3), beta(3), gamma(1), delta(1), epsilon(1). F(0) has three main subunits: a(1), b(2) and c(10-14). The alpha and beta chains form an alternating ring which encloses part of the gamma chain. F(1) is attached to F(0) by a central stalk formed by the gamma and epsilon chains, while a peripheral stalk is formed by the delta and b chains.

It is found in the cell inner membrane. Its function is as follows. F(1)F(0) ATP synthase produces ATP from ADP in the presence of a proton or sodium gradient. F-type ATPases consist of two structural domains, F(1) containing the extramembraneous catalytic core and F(0) containing the membrane proton channel, linked together by a central stalk and a peripheral stalk. During catalysis, ATP synthesis in the catalytic domain of F(1) is coupled via a rotary mechanism of the central stalk subunits to proton translocation. In terms of biological role, key component of the F(0) channel; it plays a direct role in translocation across the membrane. A homomeric c-ring of between 10-14 subunits forms the central stalk rotor element with the F(1) delta and epsilon subunits. The protein is ATP synthase subunit c of Gluconacetobacter diazotrophicus (strain ATCC 49037 / DSM 5601 / CCUG 37298 / CIP 103539 / LMG 7603 / PAl5).